Reading from the N-terminus, the 612-residue chain is Glutamine--fructose-6-phosphate aminotransferase [isomerizing] (612 aa).

Cysteine 2 (nucleophile; for GATase activity) is an active-site residue. One can recognise a Glutamine amidotransferase type-2 domain in the interval 2 to 217; the sequence is CGIVGGVAER…EGDIARLTRD (216 aa). 2 SIS domains span residues 283–428 and 461–602; these read AEAD…VKEQ and LSEL…VDQP. Lysine 607 acts as the For Fru-6P isomerization activity in catalysis.

Homodimer.

The protein localises to the cytoplasm. It catalyses the reaction D-fructose 6-phosphate + L-glutamine = D-glucosamine 6-phosphate + L-glutamate. Its function is as follows. Catalyzes the first step in hexosamine metabolism, converting fructose-6P into glucosamine-6P using glutamine as a nitrogen source. The protein is Glutamine--fructose-6-phosphate aminotransferase [isomerizing] of Acinetobacter baylyi (strain ATCC 33305 / BD413 / ADP1).